A 284-amino-acid polypeptide reads, in one-letter code: tRNA N(3)-cytidine methyltransferase METTL6 (284 aa).

Residues W45 and Y49 each coordinate S-adenosyl-L-methionine. S-adenosyl-L-homocysteine contacts are provided by Y49, H61, E85, G87, D110, D136, L137, and I157. S-adenosyl-L-methionine contacts are provided by G87, D110, D136, L137, and I157.

The protein belongs to the methyltransferase superfamily. METL family. Monomer. Interacts with SARS1/SerRS; interaction is mediated via tRNA(Ser) and is required for N(3)-methylcytidine methylation.

The protein resides in the cytoplasm. It is found in the nucleus. It catalyses the reaction cytidine(32) in tRNA(Ser) + S-adenosyl-L-methionine = N(3)-methylcytidine(32) in tRNA(Ser) + S-adenosyl-L-homocysteine + H(+). Functionally, S-adenosyl-L-methionine-dependent methyltransferase that mediates N(3)-methylcytidine modification of residue 32 of the tRNA anticodon loop of tRNA(Ser), including tRNA(Ser)(UGA) and tRNA(Ser)(GCU). Interaction with SARS1/SerRS is required for N(3)-methylcytidine methylation. The protein is tRNA N(3)-cytidine methyltransferase METTL6 of Homo sapiens (Human).